The primary structure comprises 98 residues: Large ribosomal subunit protein uL23 (98 aa).

Belongs to the universal ribosomal protein uL23 family. In terms of assembly, part of the 50S ribosomal subunit. Contacts protein L29, and trigger factor when it is bound to the ribosome.

Functionally, one of the early assembly proteins it binds 23S rRNA. One of the proteins that surrounds the polypeptide exit tunnel on the outside of the ribosome. Forms the main docking site for trigger factor binding to the ribosome. The chain is Large ribosomal subunit protein uL23 from Caulobacter sp. (strain K31).